The sequence spans 291 residues: Pituitary-specific positive transcription factor 1 (291 aa).

Positions 5–13 (SFTSADTFI) match the 9aaTAD motif. Residues 124–198 (MDSPEIRELE…ILSKWLEEAE (75 aa)) enclose the POU-specific domain. Positions 214-273 (KRKRRTTISVAAKDALERHFGEHSKPSSQEIMRMAEELNLEKEVVRVWFCNRRQREKRVK) form a DNA-binding region, homeobox.

Belongs to the POU transcription factor family. Class-1 subfamily. In terms of assembly, interacts with PITX1. Interacts with LHX3. Interacts with ELK1.

It is found in the nucleus. In terms of biological role, transcription factor involved in the specification of the lactotrope, somatotrope, and thyrotrope phenotypes in the developing anterior pituitary. Activates growth hormone and prolactin genes. Specifically binds to the consensus sequence 5'-TAAAT-3'. The polypeptide is Pituitary-specific positive transcription factor 1 (Pou1f1) (Mus musculus (Mouse)).